Consider the following 418-residue polypeptide: Acyl-coenzyme A amino acid N-acyltransferase 2 (418 aa).

Catalysis depends on charge relay system residues Ser-234, Asp-327, and His-361. Positions 416–418 (GKL) match the Microbody targeting signal motif.

It belongs to the C/M/P thioester hydrolase family.

It is found in the peroxisome. In terms of biological role, acyltransferase which efficiently conjugates very long-chain and long-chain fatty acids to taurine. Shows no conjugation activity in the presence of glycine. The chain is Acyl-coenzyme A amino acid N-acyltransferase 2 from Rattus norvegicus (Rat).